A 127-amino-acid polypeptide reads, in one-letter code: uncharacterized protein (127 aa).

2 disordered regions span residues 1–22 (MLPAGCWNDTSRDGPGFRKMKG) and 53–106 (LVGK…PGPK). Residues 76–95 (PNGEAHAEQARRKISVEEKQ) are compositionally biased toward basic and acidic residues.

The protein resides in the mitochondrion. This is an uncharacterized protein from Arabidopsis thaliana (Mouse-ear cress).